Reading from the N-terminus, the 359-residue chain is MKLKQIELKNFRNYEDLKLDFHPNLNIFLGQNAQGKTNILEAIHFLALTRSHRTSHDKELIRWSGQEMKVSGLVEKAHATVPLEVQLSSKGRIAKANHLKENRLADYIGQLKILMFAPENLELVKGSPATRRRFMDIELGQIHAVYLYDSMRYNRALKERNAYLKFDQAKIDKNFLTVLDEQLAEHGNKIMFERKTFIEKLEIHAKKIHEQLTHGLETLKITYNQNVKTDFSKELLSRQDHDIFRHQTTVGPHRDDLQFFINDINVADFGSQGQQRTVALSIKLAEIDLIFEETGEYPILLLDDVMSELDNHRQLDLIETSLGKTQTFITTTTLDHLKNLPENLSIFHVTDGTIEKEKE.

30 to 37 contributes to the ATP binding site; it reads GQNAQGKT.

Belongs to the RecF family.

Its subcellular location is the cytoplasm. In terms of biological role, the RecF protein is involved in DNA metabolism; it is required for DNA replication and normal SOS inducibility. RecF binds preferentially to single-stranded, linear DNA. It also seems to bind ATP. The protein is DNA replication and repair protein RecF of Lactococcus lactis subsp. cremoris (strain MG1363).